The following is a 136-amino-acid chain: Mini-ribonuclease 3 (136 aa).

The active site involves aspartate 20.

Belongs to the MrnC RNase family. Homodimer. Mg(2+) serves as cofactor.

It is found in the cytoplasm. Functionally, involved in correct processing of both the 5' and 3' ends of 23S rRNA precursor. Processes 30S rRNA precursor transcript even in absence of ribonuclease 3 (Rnc); Rnc processes 30S rRNA into smaller rRNA precursors. This Listeria monocytogenes serovar 1/2a (strain ATCC BAA-679 / EGD-e) protein is Mini-ribonuclease 3.